A 929-amino-acid polypeptide reads, in one-letter code: Type I restriction enzyme SauCOLORF180P endonuclease subunit (929 aa).

The 165-residue stretch at 254–418 folds into the Helicase ATP-binding domain; it reads QQATETGNNG…DGRTTADIFG (165 aa). Residue 268–274 participates in ATP binding; sequence TTGSGKT.

Belongs to the HsdR family. In terms of assembly, the type I restriction/modification system is composed of three polypeptides R, M and S.

The catalysed reaction is Endonucleolytic cleavage of DNA to give random double-stranded fragments with terminal 5'-phosphates, ATP is simultaneously hydrolyzed.. Functionally, the restriction (R) subunit of a type I restriction enzyme that recognizes an undetermined sequence and cleaves a random distance away. Subunit R is required for both nuclease and ATPase activities, but not for modification. After locating a non-methylated recognition site, the enzyme complex serves as a molecular motor that translocates DNA in an ATP-dependent manner until a collision occurs that triggers cleavage. This is Type I restriction enzyme SauCOLORF180P endonuclease subunit from Staphylococcus aureus (strain COL).